A 508-amino-acid chain; its full sequence is Photosystem II CP47 reaction center protein (508 aa).

6 helical membrane-spanning segments follow: residues 21-36 (SVHIMHTALVAGWAGS), 101-115 (IVFSGLCFLAAIWHW), 140-156 (GIHLFLSGVACFGFGAF), 203-218 (IAAGTLGILAGLFHLS), 237-252 (VLSSSIAAVFFAAFVV), and 457-472 (SFALLFFFGHIWHGAR).

This sequence belongs to the PsbB/PsbC family. PsbB subfamily. As to quaternary structure, PSII is composed of 1 copy each of membrane proteins PsbA, PsbB, PsbC, PsbD, PsbE, PsbF, PsbH, PsbI, PsbJ, PsbK, PsbL, PsbM, PsbT, PsbX, PsbY, PsbZ, Psb30/Ycf12, at least 3 peripheral proteins of the oxygen-evolving complex and a large number of cofactors. It forms dimeric complexes. The cofactor is Binds multiple chlorophylls. PSII binds additional chlorophylls, carotenoids and specific lipids..

Its subcellular location is the plastid. It is found in the chloroplast thylakoid membrane. Its function is as follows. One of the components of the core complex of photosystem II (PSII). It binds chlorophyll and helps catalyze the primary light-induced photochemical processes of PSII. PSII is a light-driven water:plastoquinone oxidoreductase, using light energy to abstract electrons from H(2)O, generating O(2) and a proton gradient subsequently used for ATP formation. This is Photosystem II CP47 reaction center protein from Olimarabidopsis pumila (Dwarf rocket).